Reading from the N-terminus, the 38-residue chain is Cytochrome b6-f complex subunit 5 (38 aa).

Residues 5–25 form a helical membrane-spanning segment; the sequence is LLSGIVLGLIPITLAGLFVTA.

Belongs to the PetG family. As to quaternary structure, the 4 large subunits of the cytochrome b6-f complex are cytochrome b6, subunit IV (17 kDa polypeptide, PetD), cytochrome f and the Rieske protein, while the 4 small subunits are PetG, PetL, PetM and PetN. The complex functions as a dimer.

It localises to the plastid. The protein localises to the chloroplast thylakoid membrane. Its function is as follows. Component of the cytochrome b6-f complex, which mediates electron transfer between photosystem II (PSII) and photosystem I (PSI), cyclic electron flow around PSI, and state transitions. PetG is required for either the stability or assembly of the cytochrome b6-f complex. The chain is Cytochrome b6-f complex subunit 5 from Adiantum capillus-veneris (Maidenhair fern).